A 367-amino-acid chain; its full sequence is uncharacterized protein (367 aa).

Helical transmembrane passes span Y35 to W55, L61 to V81, E92 to G112, and L113 to L133. Disordered stretches follow at residues K177–I220, S249–P283, and G296–K367. A compositionally biased stretch (polar residues) spans N257–S274. The segment covering S302–T312 has biased composition (low complexity). Residues S323–Q342 are compositionally biased toward basic and acidic residues. The segment covering P357–K367 has biased composition (basic residues).

The protein belongs to the chlamydial CPn_0443/CT_005/TC_0273 family.

It localises to the cell membrane. This is an uncharacterized protein from Chlamydia muridarum (strain MoPn / Nigg).